We begin with the raw amino-acid sequence, 182 residues long: Adenine phosphoribosyltransferase (182 aa).

This sequence belongs to the purine/pyrimidine phosphoribosyltransferase family. In terms of assembly, homodimer.

The protein resides in the cytoplasm. The catalysed reaction is AMP + diphosphate = 5-phospho-alpha-D-ribose 1-diphosphate + adenine. The protein operates within purine metabolism; AMP biosynthesis via salvage pathway; AMP from adenine: step 1/1. Its function is as follows. Catalyzes a salvage reaction resulting in the formation of AMP, that is energically less costly than de novo synthesis. This Campylobacter jejuni subsp. doylei (strain ATCC BAA-1458 / RM4099 / 269.97) protein is Adenine phosphoribosyltransferase.